Here is a 316-residue protein sequence, read N- to C-terminus: 4-amino-5-hydroxymethyl-2-methylpyrimidine phosphate synthase (316 aa).

The residue at position 66 (K66) is an N6-(pyridoxal phosphate)lysine. Residue H70 is part of the active site. 118–121 (GEFG) serves as a coordination point for pyridoxal 5'-phosphate. A CCCFC; essential for catalytic activity, may be the site of iron coordination motif is present at residues 191–195 (CCCFC).

It belongs to the NMT1/THI5 family. Homodimer. Fe cation serves as cofactor.

The enzyme catalyses N(6)-(pyridoxal phosphate)-L-lysyl-[4-amino-5-hydroxymethyl-2-methylpyrimidine phosphate synthase] + L-histidyl-[4-amino-5-hydroxymethyl-2-methylpyrimidine phosphate synthase] + 2 Fe(3+) + 4 H2O = L-lysyl-[4-amino-5-hydroxymethyl-2-methylpyrimidine phosphate synthase] + (2S)-2-amino-5-hydroxy-4-oxopentanoyl-[4-amino-5-hydroxymethyl-2-methylpyrimidine phosphate synthase] + 4-amino-2-methyl-5-(phosphooxymethyl)pyrimidine + 3-oxopropanoate + 2 Fe(2+) + 2 H(+). The protein operates within cofactor biosynthesis; thiamine diphosphate biosynthesis. Functionally, responsible for the formation of the pyrimidine heterocycle in the thiamine biosynthesis pathway. Catalyzes the formation of hydroxymethylpyrimidine phosphate (HMP-P) from histidine and pyridoxal phosphate (PLP). The protein uses PLP and the active site histidine to form HMP-P, generating an inactive enzyme. The enzyme can only undergo a single turnover, which suggests it is a suicide enzyme. This chain is 4-amino-5-hydroxymethyl-2-methylpyrimidine phosphate synthase, found in Legionella pneumophila subsp. pneumophila (strain Philadelphia 1 / ATCC 33152 / DSM 7513).